A 221-amino-acid polypeptide reads, in one-letter code: Vesicle-associated membrane protein 713 (221 aa).

At alanine 2 the chain carries N-acetylalanine. The Cytoplasmic portion of the chain corresponds to 2–190; it reads AIIFALVARG…RTIMWWRNVK (189 aa). Positions 7–112 constitute a Longin domain; the sequence is LVARGTVVLS…SMNDEFSRVL (106 aa). Residues 127-187 enclose the v-SNARE coiled-coil homology domain; that stretch reads RMSRIKGEMS…RRYRTIMWWR (61 aa). The helical; Anchor for type IV membrane protein transmembrane segment at 191 to 211 threads the bilayer; that stretch reads LTIALILVLALVVYIAMAFVC. Residues 212-221 lie on the Vesicular side of the membrane; the sequence is HGPSLPSCFK.

It belongs to the synaptobrevin family. As to quaternary structure, interacts with subunits of the vacuole protein sorting (HOPS) complex including VPS11, VCL1, VPS18, VPS33, VPS39 and VPS41. In terms of tissue distribution, highly expressed in stems and roots. Detected in flowers and leaves.

It is found in the vacuole membrane. The protein localises to the prevacuolar compartment membrane. In terms of biological role, involved in the targeting and/or fusion of transport vesicles to their target membrane. The polypeptide is Vesicle-associated membrane protein 713 (Arabidopsis thaliana (Mouse-ear cress)).